A 784-amino-acid chain; its full sequence is Ubiquitin carboxyl-terminal hydrolase 1 (784 aa).

2 disordered regions span residues 1-21 (MPGV…SKKN) and 33-54 (TKRA…EYRG). Polar residues predominate over residues 7–16 (SESNGLSRGS). Phosphoserine occurs at positions 16, 42, and 67. One can recognise a USP domain in the interval 81-784 (VGLNNLGNTC…TPYLLFYKKL (704 aa)). Catalysis depends on cysteine 90, which acts as the Nucleophile. 2 stretches are compositionally biased toward basic and acidic residues: residues 232–243 (KVEEKSLQKEET) and 252–264 (DSTR…KEQL). Disordered regions lie at residues 232 to 341 (KVEE…KINW) and 363 to 411 (TNQR…SSEA). Polar residues predominate over residues 389–407 (NTVNGSGPASPGSSVTPVD). Serine 475 is subject to Phosphoserine. Residue histidine 593 is the Proton acceptor of the active site. The tract at residues 686 to 723 (PEKVVGTPFTDSRNSETNDTNGTQESDRSKESSDQTGI) is disordered. Residues 694–709 (FTDSRNSETNDTNGTQ) are compositionally biased toward polar residues. Serine 767 bears the Phosphoserine mark.

This sequence belongs to the peptidase C19 family. As to quaternary structure, interacts with FANCD2 and PCNA. Interacts with WDR48. Interacts with ATAD5; the interaction regulates USP1-mediated PCNA deubiquitination. Post-translationally, autocatalytic cleavage of USP1 following UV irradiation inactivates it, leading to an increase in ubiquitinated PCNA, recruitment of POLH and translesion synthesis. Ubiquitinated by the CRL2(KLHDC2) complex following autocatalytic cleavage, leading to its degradation: the CRL2(KLHDC2) complex recognizes the diglycine (Gly-Gly) at the C-terminus.

Its subcellular location is the nucleus. It carries out the reaction Thiol-dependent hydrolysis of ester, thioester, amide, peptide and isopeptide bonds formed by the C-terminal Gly of ubiquitin (a 76-residue protein attached to proteins as an intracellular targeting signal).. Functionally, negative regulator of DNA damage repair which specifically deubiquitinates monoubiquitinated FANCD2. Also involved in PCNA-mediated translesion synthesis (TLS) by deubiquitinating monoubiquitinated PCNA. Has almost no deubiquitinating activity by itself and requires the interaction with WDR48 to have a high activity. The sequence is that of Ubiquitin carboxyl-terminal hydrolase 1 from Rattus norvegicus (Rat).